Consider the following 295-residue polypeptide: Small ribosomal subunit protein uS2 (295 aa).

An N-acetylserine modification is found at serine 2. Serine 43 is modified (phosphoserine). Lysine 52 is subject to N6-acetyllysine. The segment at 54-113 is interaction with PPP1R16B; it reads TWEKLLLAARAIVAIENPADVSVISSRNTGQRAVLKFAAATGATPIAGRFTPGTFTNQIQ. An N6-acetyllysine; alternate modification is found at lysine 89. Residue lysine 89 forms a Glycyl lysine isopeptide (Lys-Gly) (interchain with G-Cter in SUMO2); alternate linkage. Threonine 97 is subject to Phosphothreonine. 2 laminin-binding regions span residues 161–180 and 205–229; these read IPCN…MLAR and RDPE…EFQG. [DE]-W-[ST] repeat units lie at residues 230 to 232, 247 to 249, 266 to 268, 275 to 277, and 293 to 295; these read EWT, DWS, and EWS. Residues 242 to 295 form a laminin-binding region; sequence QPEVADWSEGVQVPSVPIQQFPTEDWSAQPTTEDWSAAPTAQATEWVGTTTEWS. A disordered region spans residues 266-295; sequence DWSAQPTTEDWSAAPTAQATEWVGTTTEWS.

This sequence belongs to the universal ribosomal protein uS2 family. In terms of assembly, monomer (37LRP) and homodimer (67LR). Component of the small ribosomal subunit. Mature ribosomes consist of a small (40S) and a large (60S) subunit. The 40S subunit contains about 33 different proteins and 1 molecule of RNA (18S). The 60S subunit contains about 49 different proteins and 3 molecules of RNA (28S, 5.8S and 5S). Interacts with RPS21. Interacts with several laminins including at least LAMB1. Interacts with MDK. The mature dimeric form interacts with PPP1R16B (via its fourth ankyrin repeat). Interacts with PPP1CA only in the presence of PPP1R16B. Post-translationally, acylated. Acylation may be a prerequisite for conversion of the monomeric 37 kDa laminin receptor precursor (37LRP) to the mature dimeric 67 kDa laminin receptor (67LR), and may provide a mechanism for membrane association. Cleaved by stromelysin-3 (ST3) at the cell surface. Cleavage by stromelysin-3 may be a mechanism to alter cell-extracellular matrix interactions.

It is found in the cell membrane. The protein resides in the cytoplasm. The protein localises to the nucleus. Functionally, required for the assembly and/or stability of the 40S ribosomal subunit. Required for the processing of the 20S rRNA-precursor to mature 18S rRNA in a late step of the maturation of 40S ribosomal subunits. Also functions as a cell surface receptor for laminin. Plays a role in cell adhesion to the basement membrane and in the consequent activation of signaling transduction pathways. May play a role in cell fate determination and tissue morphogenesis. Also acts as a receptor for several other ligands, including the pathogenic prion protein, viruses, and bacteria. Acts as a PPP1R16B-dependent substrate of PPP1CA. In Sus scrofa (Pig), this protein is Small ribosomal subunit protein uS2.